The chain runs to 290 residues: MASSKKVTLSVLSREQSEGVGARVRRSIGRPELKNLDPFLLFDEFKGGKPGGFPDHPHRGFETVSYLLEGGSMAHEDFCGHVGKMNPGDLQWMTAGRGILHAEMPCSEEPAHGLQLWVNLRRSEKMVAPQYQELKSEEIPKPTKDGVTVAVISGEALGIKSKVYTRTPTLYLDFKLDQGAKHSQPIPKGWTSFIYTISGDVYIGPDDAQQKIEPHHTAVLGEGDAVQLENKDPKRSHFVLIAGEPLREPVVQHGPFVMNTNEEISQAILDFRNAKNGFEGARTWKSKIGN.

Positions 56, 58, 101, and 103 each coordinate Fe cation.

This sequence belongs to the pirin family. As to quaternary structure, may interact with NF1/CTF1. Interacts with BCL3. Identified in a complex comprised of PIR, BLC3, NFKB1 and target DNA. Fe cation is required as a cofactor. Weakly expressed in bone marrow.

It is found in the nucleus. The protein resides in the cytoplasm. It catalyses the reaction quercetin + O2 = 2-(3,4-dihydroxybenzoyloxy)-4,6-dihydroxybenzoate + CO. Its pathway is flavonoid metabolism; quercetin degradation. Functionally, transcriptional coregulator of NF-kappa-B which facilitates binding of NF-kappa-B proteins to target kappa-B genes in a redox-state-dependent manner. May be required for efficient terminal myeloid maturation of hematopoietic cells. Has quercetin 2,3-dioxygenase activity (in vitro). The sequence is that of Pirin (Pir) from Mus musculus (Mouse).